The primary structure comprises 323 residues: ATP synthase gamma chain (323 aa).

The tract at residues 206 to 240 (NPIVNLVGFGYKERGVKPINNRRATSDIVGESKSI) is insert.

The protein belongs to the ATPase gamma chain family. In terms of assembly, F-type ATPases have 2 components, CF(1) - the catalytic core - and CF(0) - the membrane proton channel. CF(1) has five subunits: alpha(3), beta(3), gamma(1), delta(1), epsilon(1). CF(0) has three main subunits: a, b and c.

It localises to the cell inner membrane. Functionally, produces ATP from ADP in the presence of a proton gradient across the membrane. The gamma chain is believed to be important in regulating ATPase activity and the flow of protons through the CF(0) complex. This chain is ATP synthase gamma chain, found in Rickettsia conorii (strain ATCC VR-613 / Malish 7).